The following is a 349-amino-acid chain: Alanine racemase (349 aa).

Catalysis depends on lysine 35, which acts as the Proton acceptor; specific for D-alanine. Position 35 is an N6-(pyridoxal phosphate)lysine (lysine 35). Substrate is bound at residue arginine 130. Residue tyrosine 244 is the Proton acceptor; specific for L-alanine of the active site. Methionine 292 serves as a coordination point for substrate.

This sequence belongs to the alanine racemase family. Pyridoxal 5'-phosphate is required as a cofactor.

The catalysed reaction is L-alanine = D-alanine. Its pathway is amino-acid biosynthesis; D-alanine biosynthesis; D-alanine from L-alanine: step 1/1. In terms of biological role, catalyzes the interconversion of L-alanine and D-alanine. May also act on other amino acids. The sequence is that of Alanine racemase (alr) from Cereibacter sphaeroides (strain KD131 / KCTC 12085) (Rhodobacter sphaeroides).